Here is a 1415-residue protein sequence, read N- to C-terminus: DNA-directed RNA polymerase subunit beta' (1415 aa).

Residues C72, C74, C87, and C90 each coordinate Zn(2+). Mg(2+) is bound by residues D463, D465, and D467. Zn(2+) contacts are provided by C811, C885, C892, and C895.

The protein belongs to the RNA polymerase beta' chain family. The RNAP catalytic core consists of 2 alpha, 1 beta, 1 beta' and 1 omega subunit. When a sigma factor is associated with the core the holoenzyme is formed, which can initiate transcription. The cofactor is Mg(2+). It depends on Zn(2+) as a cofactor.

The catalysed reaction is RNA(n) + a ribonucleoside 5'-triphosphate = RNA(n+1) + diphosphate. In terms of biological role, DNA-dependent RNA polymerase catalyzes the transcription of DNA into RNA using the four ribonucleoside triphosphates as substrates. The chain is DNA-directed RNA polymerase subunit beta' from Cereibacter sphaeroides (strain ATCC 17023 / DSM 158 / JCM 6121 / CCUG 31486 / LMG 2827 / NBRC 12203 / NCIMB 8253 / ATH 2.4.1.) (Rhodobacter sphaeroides).